A 147-amino-acid polypeptide reads, in one-letter code: 3-hydroxyacyl-[acyl-carrier-protein] dehydratase FabZ (147 aa).

The active site involves His46.

This sequence belongs to the thioester dehydratase family. FabZ subfamily.

The protein localises to the cytoplasm. The enzyme catalyses a (3R)-hydroxyacyl-[ACP] = a (2E)-enoyl-[ACP] + H2O. Involved in unsaturated fatty acids biosynthesis. Catalyzes the dehydration of short chain beta-hydroxyacyl-ACPs and long chain saturated and unsaturated beta-hydroxyacyl-ACPs. This is 3-hydroxyacyl-[acyl-carrier-protein] dehydratase FabZ from Syntrophobacter fumaroxidans (strain DSM 10017 / MPOB).